Consider the following 269-residue polypeptide: Formamidopyrimidine-DNA glycosylase (269 aa).

The active-site Schiff-base intermediate with DNA is the Pro-2. The active-site Proton donor is the Glu-3. Lys-57 acts as the Proton donor; for beta-elimination activity in catalysis. DNA is bound by residues His-90, Arg-109, and Lys-150. Residues 235 to 269 (QVYGRKGEPCRVCGTPIVATKHAQRATFYCRQCQK) form an FPG-type zinc finger. Residue Arg-259 is the Proton donor; for delta-elimination activity of the active site.

It belongs to the FPG family. As to quaternary structure, monomer. Requires Zn(2+) as cofactor.

The enzyme catalyses Hydrolysis of DNA containing ring-opened 7-methylguanine residues, releasing 2,6-diamino-4-hydroxy-5-(N-methyl)formamidopyrimidine.. It carries out the reaction 2'-deoxyribonucleotide-(2'-deoxyribose 5'-phosphate)-2'-deoxyribonucleotide-DNA = a 3'-end 2'-deoxyribonucleotide-(2,3-dehydro-2,3-deoxyribose 5'-phosphate)-DNA + a 5'-end 5'-phospho-2'-deoxyribonucleoside-DNA + H(+). Its function is as follows. Involved in base excision repair of DNA damaged by oxidation or by mutagenic agents. Acts as a DNA glycosylase that recognizes and removes damaged bases. Has a preference for oxidized purines, such as 7,8-dihydro-8-oxoguanine (8-oxoG). Has AP (apurinic/apyrimidinic) lyase activity and introduces nicks in the DNA strand. Cleaves the DNA backbone by beta-delta elimination to generate a single-strand break at the site of the removed base with both 3'- and 5'-phosphates. In Escherichia coli O6:H1 (strain CFT073 / ATCC 700928 / UPEC), this protein is Formamidopyrimidine-DNA glycosylase.